A 329-amino-acid chain; its full sequence is GTPase Obg (329 aa).

Residues 1–159 enclose the Obg domain; it reads MQFIDQARIT…WFLQLELKLL (159 aa). Positions 160–328 constitute an OBG-type G domain; it reads AEVGIIGLPN…LLAQVWKELG (169 aa). ATP is bound by residues 166-173, 191-195, 213-216, 280-283, and 309-311; these read GLPNAGKS, FTTLV, DIPG, NKQE, and SAA. Ser173 and Thr193 together coordinate Mg(2+).

It belongs to the TRAFAC class OBG-HflX-like GTPase superfamily. OBG GTPase family. Monomer. It depends on Mg(2+) as a cofactor.

It is found in the cytoplasm. In terms of biological role, an essential GTPase which binds GTP, GDP and possibly (p)ppGpp with moderate affinity, with high nucleotide exchange rates and a fairly low GTP hydrolysis rate. Plays a role in control of the cell cycle, stress response, ribosome biogenesis and in those bacteria that undergo differentiation, in morphogenesis control. This Prochlorococcus marinus (strain MIT 9313) protein is GTPase Obg.